The following is a 520-amino-acid chain: Ribonuclease Y (520 aa).

A helical membrane pass occupies residues 3–23; it reads IVIVVISILLALIVGIVVGYL. Residues 81–118 are compositionally biased toward basic and acidic residues; sequence RMEAQKQENRLMQKEENLDRKSETLDKRESSLESKEQS. The disordered stretch occupies residues 81 to 125; that stretch reads RMEAQKQENRLMQKEENLDRKSETLDKRESSLESKEQSLTEQQQQ. The 64-residue stretch at 210-273 folds into the KH domain; the sequence is TVSVVNLPND…EIARMALEKL (64 aa). The 94-residue stretch at 336 to 429 folds into the HD domain; sequence GLKHSAEVAY…VAAADALSAA (94 aa).

Belongs to the RNase Y family.

The protein localises to the cell membrane. Its function is as follows. Endoribonuclease that initiates mRNA decay. The protein is Ribonuclease Y of Oceanobacillus iheyensis (strain DSM 14371 / CIP 107618 / JCM 11309 / KCTC 3954 / HTE831).